The chain runs to 616 residues: Dihydroxy-acid dehydratase (616 aa).

Asp81 contacts Mg(2+). Cys122 contacts [2Fe-2S] cluster. Mg(2+) is bound by residues Asp123 and Lys124. Position 124 is an N6-carboxylysine (Lys124). Position 195 (Cys195) interacts with [2Fe-2S] cluster. Glu491 lines the Mg(2+) pocket. The active-site Proton acceptor is Ser517.

Belongs to the IlvD/Edd family. Homodimer. [2Fe-2S] cluster is required as a cofactor. Requires Mg(2+) as cofactor.

It carries out the reaction (2R)-2,3-dihydroxy-3-methylbutanoate = 3-methyl-2-oxobutanoate + H2O. The catalysed reaction is (2R,3R)-2,3-dihydroxy-3-methylpentanoate = (S)-3-methyl-2-oxopentanoate + H2O. It functions in the pathway amino-acid biosynthesis; L-isoleucine biosynthesis; L-isoleucine from 2-oxobutanoate: step 3/4. It participates in amino-acid biosynthesis; L-valine biosynthesis; L-valine from pyruvate: step 3/4. Its function is as follows. Functions in the biosynthesis of branched-chain amino acids. Catalyzes the dehydration of (2R,3R)-2,3-dihydroxy-3-methylpentanoate (2,3-dihydroxy-3-methylvalerate) into 2-oxo-3-methylpentanoate (2-oxo-3-methylvalerate) and of (2R)-2,3-dihydroxy-3-methylbutanoate (2,3-dihydroxyisovalerate) into 2-oxo-3-methylbutanoate (2-oxoisovalerate), the penultimate precursor to L-isoleucine and L-valine, respectively. This chain is Dihydroxy-acid dehydratase, found in Photorhabdus laumondii subsp. laumondii (strain DSM 15139 / CIP 105565 / TT01) (Photorhabdus luminescens subsp. laumondii).